A 128-amino-acid polypeptide reads, in one-letter code: Transcription antitermination protein NusB (128 aa).

It belongs to the NusB family.

In terms of biological role, involved in transcription antitermination. Required for transcription of ribosomal RNA (rRNA) genes. Binds specifically to the boxA antiterminator sequence of the ribosomal RNA (rrn) operons. In Staphylococcus haemolyticus (strain JCSC1435), this protein is Transcription antitermination protein NusB.